The chain runs to 190 residues: Pyridoxal 5'-phosphate synthase subunit PdxT (190 aa).

Residue 46–48 (GES) coordinates L-glutamine. The active-site Nucleophile is the Cys78. L-glutamine is bound by residues Arg105 and 138 to 139 (IR). Active-site charge relay system residues include His174 and Glu176.

Belongs to the glutaminase PdxT/SNO family. In the presence of PdxS, forms a dodecamer of heterodimers. Only shows activity in the heterodimer.

It carries out the reaction aldehydo-D-ribose 5-phosphate + D-glyceraldehyde 3-phosphate + L-glutamine = pyridoxal 5'-phosphate + L-glutamate + phosphate + 3 H2O + H(+). The enzyme catalyses L-glutamine + H2O = L-glutamate + NH4(+). It participates in cofactor biosynthesis; pyridoxal 5'-phosphate biosynthesis. Functionally, catalyzes the hydrolysis of glutamine to glutamate and ammonia as part of the biosynthesis of pyridoxal 5'-phosphate. The resulting ammonia molecule is channeled to the active site of PdxS. This chain is Pyridoxal 5'-phosphate synthase subunit PdxT, found in Bifidobacterium longum (strain NCC 2705).